A 345-amino-acid polypeptide reads, in one-letter code: Ubiquitin-associated domain-containing protein 2 (345 aa).

Residues 1-35 (MFTSTGSSGLYKAPLSKSLLLVPSALSLLLALLLP) form the signal peptide. Residues 36-91 (HCQKLFVYDLHAVKNDFQIWRLICGRIICLDLKDTFCSSLLIYNFRIFERRYGSRK) lie on the Extracellular side of the membrane. Residues 92–112 (FASFLLGSWVLSALFDFLLVE) traverse the membrane as a helical segment. Residues 113–125 (AMQYFFGITAASN) lie on the Cytoplasmic side of the membrane. A helical membrane pass occupies residues 126–146 (LPSGFLAPVFALFVPFYCSIP). The Extracellular portion of the chain corresponds to 147-163 (RVQVAQILGPLSITNKT). The N-linked (GlcNAc...) asparagine glycan is linked to Asn161. A helical transmembrane segment spans residues 164–184 (LIYILGLQLFTSGSYIWIVAI). Residues 185-345 (SGLMSGLCYN…NVATNFLLQH (161 aa)) lie on the Cytoplasmic side of the membrane. Positions 305 to 345 (EVSEEQVARLMEMGFSRGDALEALRASNNDLNVATNFLLQH) constitute a UBA domain.

As to quaternary structure, interacts with LMBR1L, FAF2, AMFR and VCP.

It is found in the endoplasmic reticulum membrane. Functionally, restricts trafficking of FAF2 from the endoplasmic reticulum to lipid droplets. In association with LMBR1L and E3 ubiquitin-protein ligase AMFR, negatively regulates the canonical Wnt signaling pathway in the lymphocytes by promoting the ubiquitin-mediated degradation of CTNNB1 and Wnt receptors FZD6 and LRP6. In Macaca fascicularis (Crab-eating macaque), this protein is Ubiquitin-associated domain-containing protein 2 (UBAC2).